Here is a 193-residue protein sequence, read N- to C-terminus: Acyl carrier protein phosphodiesterase (193 aa).

It belongs to the AcpH family.

It carries out the reaction holo-[ACP] + H2O = apo-[ACP] + (R)-4'-phosphopantetheine + H(+). Functionally, converts holo-ACP to apo-ACP by hydrolytic cleavage of the phosphopantetheine prosthetic group from ACP. The chain is Acyl carrier protein phosphodiesterase from Escherichia coli O157:H7.